The primary structure comprises 225 residues: Imidazole glycerol phosphate synthase subunit HisH (225 aa).

Residues 5–220 (KNVIVDTGCA…LELDSTELNQ (216 aa)) form the Glutamine amidotransferase type-1 domain. C80 functions as the Nucleophile in the catalytic mechanism. Catalysis depends on residues H195 and E197.

Heterodimer of HisH and HisF.

Its subcellular location is the cytoplasm. The catalysed reaction is 5-[(5-phospho-1-deoxy-D-ribulos-1-ylimino)methylamino]-1-(5-phospho-beta-D-ribosyl)imidazole-4-carboxamide + L-glutamine = D-erythro-1-(imidazol-4-yl)glycerol 3-phosphate + 5-amino-1-(5-phospho-beta-D-ribosyl)imidazole-4-carboxamide + L-glutamate + H(+). It carries out the reaction L-glutamine + H2O = L-glutamate + NH4(+). The protein operates within amino-acid biosynthesis; L-histidine biosynthesis; L-histidine from 5-phospho-alpha-D-ribose 1-diphosphate: step 5/9. Its function is as follows. IGPS catalyzes the conversion of PRFAR and glutamine to IGP, AICAR and glutamate. The HisH subunit catalyzes the hydrolysis of glutamine to glutamate and ammonia as part of the synthesis of IGP and AICAR. The resulting ammonia molecule is channeled to the active site of HisF. The protein is Imidazole glycerol phosphate synthase subunit HisH of Colwellia psychrerythraea (strain 34H / ATCC BAA-681) (Vibrio psychroerythus).